The following is a 357-amino-acid chain: Probable cinnamyl alcohol dehydrogenase 7/8 (357 aa).

Position 47 (Cys47) interacts with Zn(2+). NADP(+) is bound at residue Ser49. 7 residues coordinate Zn(2+): His69, Glu70, Cys100, Cys103, Cys106, Cys114, and Cys163. Residues Thr167, 188–193, 211–216, Thr251, Gly275, and 298–300 each bind NADP(+); these read GLGGVG, SSSDKK, and SFI.

Belongs to the zinc-containing alcohol dehydrogenase family. As to quaternary structure, homodimer. Zn(2+) serves as cofactor.

The catalysed reaction is (E)-cinnamyl alcohol + NADP(+) = (E)-cinnamaldehyde + NADPH + H(+). The enzyme catalyses (E)-coniferol + NADP(+) = (E)-coniferaldehyde + NADPH + H(+). It carries out the reaction (E)-sinapyl alcohol + NADP(+) = (E)-sinapaldehyde + NADPH + H(+). It catalyses the reaction (E)-4-coumaroyl alcohol + NADP(+) = (E)-4-coumaraldehyde + NADPH + H(+). The catalysed reaction is (E)-caffeyl alcohol + NADP(+) = (E)-caffeyl aldehyde + NADPH + H(+). The protein operates within aromatic compound metabolism; phenylpropanoid biosynthesis. In terms of biological role, involved in lignin biosynthesis. Catalyzes the final step specific for the production of lignin monomers. Catalyzes the NADPH-dependent reduction of coniferaldehyde, 5-hydroxyconiferaldehyde, sinapaldehyde, 4-coumaraldehyde and caffeyl aldehyde to their respective alcohols. The polypeptide is Probable cinnamyl alcohol dehydrogenase 7/8 (CAD7) (Picea abies (Norway spruce)).